The primary structure comprises 215 residues: 3-dehydroquinate dehydratase (215 aa).

3-dehydroquinate-binding positions include 27–29 (ELR) and arginine 54. The active-site Proton donor/acceptor is histidine 112. Catalysis depends on lysine 139, which acts as the Schiff-base intermediate with substrate. Residues arginine 176 and glutamine 198 each coordinate 3-dehydroquinate.

The protein belongs to the type-I 3-dehydroquinase family. As to quaternary structure, homodimer.

The enzyme catalyses 3-dehydroquinate = 3-dehydroshikimate + H2O. Its pathway is metabolic intermediate biosynthesis; chorismate biosynthesis; chorismate from D-erythrose 4-phosphate and phosphoenolpyruvate: step 3/7. Involved in the third step of the chorismate pathway, which leads to the biosynthesis of aromatic amino acids. Catalyzes the cis-dehydration of 3-dehydroquinate (DHQ) and introduces the first double bond of the aromatic ring to yield 3-dehydroshikimate. In Pyrococcus abyssi (strain GE5 / Orsay), this protein is 3-dehydroquinate dehydratase.